The primary structure comprises 263 residues: Putative TATA-binding protein pB263R (263 aa).

This sequence belongs to the asfivirus B263R family.

Putative TATA-binding protein. This chain is Putative TATA-binding protein pB263R, found in African swine fever virus (isolate Warthog/Namibia/Wart80/1980) (ASFV).